A 391-amino-acid polypeptide reads, in one-letter code: S-adenosylmethionine synthase (391 aa).

Histidine 14 contacts ATP. Aspartate 16 lines the Mg(2+) pocket. Glutamate 42 is a K(+) binding site. 2 residues coordinate L-methionine: glutamate 55 and glutamine 98. The flexible loop stretch occupies residues 98-108 (QSADIAMGVDE). Residues 172-174 (DGK), 238-239 (RF), aspartate 247, 253-254 (RK), alanine 270, and lysine 274 contribute to the ATP site. Position 247 (aspartate 247) interacts with L-methionine. Lysine 278 lines the L-methionine pocket.

This sequence belongs to the AdoMet synthase family. In terms of assembly, homotetramer; dimer of dimers. Mg(2+) serves as cofactor. The cofactor is K(+).

The protein resides in the cytoplasm. It catalyses the reaction L-methionine + ATP + H2O = S-adenosyl-L-methionine + phosphate + diphosphate. It functions in the pathway amino-acid biosynthesis; S-adenosyl-L-methionine biosynthesis; S-adenosyl-L-methionine from L-methionine: step 1/1. Functionally, catalyzes the formation of S-adenosylmethionine (AdoMet) from methionine and ATP. The overall synthetic reaction is composed of two sequential steps, AdoMet formation and the subsequent tripolyphosphate hydrolysis which occurs prior to release of AdoMet from the enzyme. This Clostridium acetobutylicum (strain ATCC 824 / DSM 792 / JCM 1419 / IAM 19013 / LMG 5710 / NBRC 13948 / NRRL B-527 / VKM B-1787 / 2291 / W) protein is S-adenosylmethionine synthase.